We begin with the raw amino-acid sequence, 522 residues long: Target of rapamycin complex 2 subunit MAPKAP1 (522 aa).

Positions Gly-2–His-184 are interaction with MAP3K2. Residues Gly-2 to Lys-267 form an interaction with NBN region. Thr-86 carries the phosphothreonine modification. Ser-128, Ser-186, Ser-315, and Ser-356 each carry phosphoserine. Positions Gln-139–Lys-267 constitute a CRIM domain. Residues Leu-279–Arg-353 form an SIN1-type RBD region. Residues His-382–Glu-487 enclose the SIN1-type PH domain. Arg-393 is a binding site for a 1,2-diacyl-sn-glycero-3-phospho-(1D-myo-inositol-3,4,5-trisphosphate). Residue Thr-398 is modified to Phosphothreonine. Residues Lys-428 and Lys-464 each contribute to the a 1,2-diacyl-sn-glycero-3-phospho-(1D-myo-inositol-3,4,5-trisphosphate) site. The interaction with ATF2 stretch occupies residues Phe-468–Gln-522. Ser-510 is subject to Phosphoserine.

It belongs to the SIN1 family. As to quaternary structure, component of the mechanistic target of rapamycin complex 2 (mTORC2), consisting in two heterotretramers composed of MTOR, MLST8, RICTOR and MAPKAP1/SIN1. The mTORC2 core complex associates with PRR5/PROTOR1 and/or PRR5L/PROTOR2. Contrary to mTORC1, mTORC2 does not bind to and is not sensitive to FKBP12-rapamycin. Interacts with MAP3K2. Interacts with ATF2. Interacts with MAPK8. Interacts with GTP-bound HRAS and KRAS; inhibiting their activity. Interacts with IFNAR2. In terms of processing, phosphorylation at Ser-128 by PKC promotes relocalization to the perinuclear region, where the mTORC2 complex specifically mediates phosphorylation of SGK1. Phosphorylated at Thr-86 by AKT1 or RPS6KB1 in the presence of growth factors; the effect of this phosphorylation is however unclear. According to two studies, phosphorylation at Thr-86 by AKT1 is part of a positive feedback loop that increases mTORC2 activation. According to another study, phosphorylation at Thr-86 and Thr-398 by RPS6KB1 promotes dissociation from the mTORC2 complex, leading to inhibit mTORC2 signaling. Present in the lumenal epithelium and glandular epithelium of endometrium (at protein level).

Its subcellular location is the cell membrane. It is found in the cytoplasmic vesicle. The protein resides in the endoplasmic reticulum membrane. The protein localises to the early endosome membrane. It localises to the late endosome membrane. Its subcellular location is the lysosome membrane. It is found in the golgi apparatus membrane. The protein resides in the mitochondrion outer membrane. The protein localises to the cytoplasm. It localises to the perinuclear region. Its subcellular location is the nucleus. Phosphatidylinositol 3,4,5-trisphosphate (PI(3,4,5)P3) promotes MTOR activation by relieving MAPKAP1/SIN1-mediated inhibition of MTOR that takes place in absence of PI(3,4,5)P3. Functionally, component of the mechanistic target of rapamycin complex 2 (mTORC2), which transduces signals from growth factors to pathways involved in proliferation, cytoskeletal organization, lipogenesis and anabolic output. In response to growth factors, mTORC2 phosphorylates and activates AGC protein kinase family members, including AKT (AKT1, AKT2 and AKT3), PKC (PRKCA, PRKCB and PRKCE) and SGK1. In contrast to mTORC1, mTORC2 is nutrient-insensitive. Within the mTORC2 complex, MAPKAP1/SIN1 acts as a substrate adapter which recognizes and binds AGC protein kinase family members for phosphorylation by MTOR. mTORC2 plays a critical role in AKT1 activation by mediating phosphorylation of different sites depending on the context, such as 'Thr-450', 'Ser-473', 'Ser-477' or 'Thr-479', facilitating the phosphorylation of the activation loop of AKT1 on 'Thr-308' by PDPK1/PDK1 which is a prerequisite for full activation. mTORC2 catalyzes the phosphorylation of SGK1 at 'Ser-422' and of PRKCA on 'Ser-657'. The mTORC2 complex also phosphorylates various proteins involved in insulin signaling, such as FBXW8 and IGF2BP1. mTORC2 acts upstream of Rho GTPases to regulate the actin cytoskeleton, probably by activating one or more Rho-type guanine nucleotide exchange factors. mTORC2 promotes the serum-induced formation of stress-fibers or F-actin. MAPKAP1 inhibits MAP3K2 by preventing its dimerization and autophosphorylation. Inhibits HRAS and KRAS independently of mTORC2 complex. Enhances osmotic stress-induced phosphorylation of ATF2 and ATF2-mediated transcription. Involved in ciliogenesis, regulates cilia length through its interaction with CCDC28B independently of mTORC2 complex. In Ovis aries (Sheep), this protein is Target of rapamycin complex 2 subunit MAPKAP1 (MAPKAP1).